A 267-amino-acid polypeptide reads, in one-letter code: Undecaprenyl-diphosphatase (267 aa).

A run of 8 helical transmembrane segments spans residues 1 to 21, 39 to 59, 87 to 107, 111 to 131, 149 to 169, 189 to 209, 218 to 238, and 246 to 266; these read MTYF…FLPI, QGLA…VMYF, WLII…KDFI, LRSA…LWWV, ALFL…RSGI, FLMS…KLAL, FLGT…HFFL, and MTPF…WLAL.

It belongs to the UppP family.

Its subcellular location is the cell inner membrane. The enzyme catalyses di-trans,octa-cis-undecaprenyl diphosphate + H2O = di-trans,octa-cis-undecaprenyl phosphate + phosphate + H(+). Catalyzes the dephosphorylation of undecaprenyl diphosphate (UPP). Confers resistance to bacitracin. This is Undecaprenyl-diphosphatase from Aliivibrio salmonicida (strain LFI1238) (Vibrio salmonicida (strain LFI1238)).